A 791-amino-acid polypeptide reads, in one-letter code: Centrosomal protein of 89 kDa (791 aa).

The tract at residues alanine 27–serine 203 is disordered. Pro residues predominate over residues proline 30 to proline 45. Residue serine 50 is modified to Phosphoserine. Residues serine 50–threonine 62 show a composition bias toward low complexity. Residues serine 75–phenylalanine 89 show a composition bias toward basic and acidic residues. The segment covering alanine 94–asparagine 107 has biased composition (polar residues). The span at arginine 137–glutamine 161 shows a compositional bias: basic and acidic residues. The segment covering serine 181 to serine 190 has biased composition (low complexity). Coiled coils occupy residues serine 252–alanine 291, leucine 370–glutamate 598, and histidine 670–glutamine 737.

Its subcellular location is the cytoplasm. It localises to the cytosol. It is found in the cytoskeleton. The protein resides in the microtubule organizing center. The protein localises to the centrosome. Its subcellular location is the spindle pole. It localises to the centriole. It is found in the mitochondrion intermembrane space. Functionally, required for ciliogenesis. Also plays a role in mitochondrial metabolism where it may modulate complex IV activity. The protein is Centrosomal protein of 89 kDa (Cep89) of Mus musculus (Mouse).